Consider the following 626-residue polypeptide: Trehalase (626 aa).

Positions 1 to 35 (MASSCSIRCGSRNILVNAAATFLALLVVLRCFANA) are cleaved as a signal peptide. Topologically, residues 36 to 595 (EKPSPCQSDV…STPQPVVVST (560 aa)) are extracellular. Asn104 carries an N-linked (GlcNAc...) asparagine glycan. Residues Arg181, 188 to 189 (WD), Asn225, and 234 to 236 (RSQ) each bind substrate. Asn274 is a glycosylation site (N-linked (GlcNAc...) asparagine). Substrate contacts are provided by residues 299–301 (RPE) and Gly333. Residue Asp335 is the Proton donor/acceptor of the active site. 4 N-linked (GlcNAc...) asparagine glycosylation sites follow: Asn350, Asn384, Asn498, and Asn525. Glu532 functions as the Proton donor/acceptor in the catalytic mechanism. Glu547 is a substrate binding site. A helical transmembrane segment spans residues 596–616 (AGQVMTGILALVISLAAGFIG). The Cytoplasmic portion of the chain corresponds to 617-626 (KMRCANNAAQ).

Belongs to the glycosyl hydrolase 37 family. Monomer. Glycosylated; contains 3.1% carbohydrates.

It is found in the membrane. It catalyses the reaction alpha,alpha-trehalose + H2O = alpha-D-glucose + beta-D-glucose. Its activity is regulated as follows. Inhibited by sodium, potassium and ammonium ions, and by TEMED. This chain is Trehalase, found in Apis mellifera (Honeybee).